Reading from the N-terminus, the 1151-residue chain is PPi-type phosphoenolpyruvate carboxykinase 1 (1151 aa).

Residues 1083 to 1129 (RQKLEVAKLNKDLAYLNKTIAEKPRLAETLNKQIAAVKEELQYVSSE) are a coiled coil.

The protein belongs to the PPi-type phosphoenolpyruvate carboxykinase family. As to quaternary structure, monomer and trimer; forms heterotrimers with PEPCK2 and PEPCK3.

It is found in the cytoplasm. The protein resides in the cytosol. The enzyme catalyses oxaloacetate + diphosphate = phosphoenolpyruvate + phosphate + CO2. Functionally, inorganic pyrophosphate (PPi)-dependent phosphoenolpyruvate carboxykinase, which regulates the carbon flow of the central metabolism by fixing CO(2) to phosphoenolpyruvate to produce oxaloacetate. Can also produce pyruvate and diphosphate from phosphoenolpyruvate and phosphate. The polypeptide is PPi-type phosphoenolpyruvate carboxykinase 1 (Entamoeba histolytica (strain ATCC 30459 / HM-1:IMSS / ABRM)).